A 304-amino-acid polypeptide reads, in one-letter code: Serine/threonine-protein phosphatase PP1 isozyme 3 (304 aa).

Positions 61, 63, 89, and 121 each coordinate Mn(2+). Residue H122 is the Proton donor of the active site. Mn(2+)-binding residues include H170 and H245.

The protein belongs to the PPP phosphatase family. PP-1 subfamily. The cofactor is Mn(2+).

It carries out the reaction O-phospho-L-seryl-[protein] + H2O = L-seryl-[protein] + phosphate. It catalyses the reaction O-phospho-L-threonyl-[protein] + H2O = L-threonyl-[protein] + phosphate. The protein is Serine/threonine-protein phosphatase PP1 isozyme 3 (NPP3) of Nicotiana tabacum (Common tobacco).